We begin with the raw amino-acid sequence, 208 residues long: Cytochrome c oxidase assembly protein CtaG (208 aa).

Over 1–19 the chain is Cytoplasmic; sequence MKQRPTGPDTTPRNRRGFG. The chain crosses the membrane as a helical; Signal-anchor for type II membrane protein span at residues 20-42; that stretch reads RDTAVASVCGLVVALMVGASYAA. Topologically, residues 43–208 are periplasmic; it reads VPFYNWFCRV…SEAGPRQGAL (166 aa).

The protein belongs to the COX11/CtaG family.

It localises to the cell inner membrane. In terms of biological role, exerts its effect at some terminal stage of cytochrome c oxidase synthesis, probably by being involved in the insertion of the copper B into subunit I. The sequence is that of Cytochrome c oxidase assembly protein CtaG from Rhodopseudomonas palustris (strain BisA53).